The primary structure comprises 1135 residues: Topless-related protein 4 (1135 aa).

Residues 4-36 (LSRELVFLILQFLDEEKFKDTVHRLEKESGFFF) enclose the LisH domain. One can recognise a CTLH domain in the interval 34 to 92 (FFFNMRYFEDSVTAGEWDDVEKYLSGFTKVDDNRYSMKIFFEIRKQKYLEALDKKDHAK). S214 carries the phosphoserine modification. A disordered region spans residues 281-303 (LKRERPRSPPTNSLSMDYQTADS). Over residues 290 to 303 (PTNSLSMDYQTADS) the composition is skewed to polar residues. WD repeat units lie at residues 355–395 (SQGS…KLVS), 417–456 (EYTA…DLRN), 462–503 (AHAG…KLHT), 506–547 (GHEA…SRVD), 550–593 (APGR…VKRT), 597–636 (LGKR…LLSS), 638–680 (AAEG…RILH), 776–815 (LLPA…RNLL), 843–881 (NKED…TMTT), 884–924 (APPP…VKSK), 927–966 (GHQK…KQAS), and 1020–1059 (ESSG…LKCR). The interval 1095 to 1135 (DGGVHVIEPPGPEGKWGISAPPENGAGPSVSSAPGSDQQPR) is disordered. Positions 1119-1135 (GAGPSVSSAPGSDQQPR) are enriched in low complexity.

Tetramer. Interacts with WUS (via the C-terminal domain). Interacts with SPL (via EAR motif). Interacts with SPEAR3/TIE1. Binds to and corepresses GAF1/IDD2 at the promoter of GA20OX2 gene.

It is found in the nucleus. Its function is as follows. Transcription corepressor of Zinc finger transcription factors GAF1/IDD2 and ENY/IDD1 in regulation of gibberellin homeostasis and signaling. The sequence is that of Topless-related protein 4 (TPR4) from Arabidopsis thaliana (Mouse-ear cress).